The following is a 37-amino-acid chain: Large ribosomal subunit protein bL36 (37 aa).

This sequence belongs to the bacterial ribosomal protein bL36 family.

The protein is Large ribosomal subunit protein bL36 of Paracidovorax citrulli (strain AAC00-1) (Acidovorax citrulli).